Here is a 576-residue protein sequence, read N- to C-terminus: Lysine--tRNA ligase (576 aa).

Glutamate 412 and glutamate 419 together coordinate Mg(2+).

Belongs to the class-II aminoacyl-tRNA synthetase family. In terms of assembly, homodimer. Mg(2+) is required as a cofactor.

The protein localises to the cytoplasm. The enzyme catalyses tRNA(Lys) + L-lysine + ATP = L-lysyl-tRNA(Lys) + AMP + diphosphate. The protein is Lysine--tRNA ligase of Phocaeicola vulgatus (strain ATCC 8482 / DSM 1447 / JCM 5826 / CCUG 4940 / NBRC 14291 / NCTC 11154) (Bacteroides vulgatus).